Here is a 344-residue protein sequence, read N- to C-terminus: GTPase Obg (344 aa).

Residues 1 to 159 form the Obg domain; it reads MKFLDLAKVY…RTIWLRLKLI (159 aa). An OBG-type G domain is found at 160–326; the sequence is ADVGLLGLPN…VLRVLRARVD (167 aa). Residues 166-173, 191-195, 212-215, 279-282, and 307-309 each bind GTP; these read GLPNAGKS, FTTLV, DIPG, NKID, and SGV. Residues S173 and T193 each contribute to the Mg(2+) site.

This sequence belongs to the TRAFAC class OBG-HflX-like GTPase superfamily. OBG GTPase family. As to quaternary structure, monomer. The cofactor is Mg(2+).

The protein resides in the cytoplasm. Functionally, an essential GTPase which binds GTP, GDP and possibly (p)ppGpp with moderate affinity, with high nucleotide exchange rates and a fairly low GTP hydrolysis rate. Plays a role in control of the cell cycle, stress response, ribosome biogenesis and in those bacteria that undergo differentiation, in morphogenesis control. In Jannaschia sp. (strain CCS1), this protein is GTPase Obg.